Reading from the N-terminus, the 57-residue chain is Large ribosomal subunit protein bL32 (57 aa).

This sequence belongs to the bacterial ribosomal protein bL32 family.

The protein is Large ribosomal subunit protein bL32 of Ureaplasma parvum serovar 3 (strain ATCC 27815 / 27 / NCTC 11736).